The following is a 267-amino-acid chain: Indole-3-glycerol phosphate synthase (267 aa).

Belongs to the TrpC family.

The catalysed reaction is 1-(2-carboxyphenylamino)-1-deoxy-D-ribulose 5-phosphate + H(+) = (1S,2R)-1-C-(indol-3-yl)glycerol 3-phosphate + CO2 + H2O. It functions in the pathway amino-acid biosynthesis; L-tryptophan biosynthesis; L-tryptophan from chorismate: step 4/5. In Polynucleobacter asymbioticus (strain DSM 18221 / CIP 109841 / QLW-P1DMWA-1) (Polynucleobacter necessarius subsp. asymbioticus), this protein is Indole-3-glycerol phosphate synthase.